Here is a 259-residue protein sequence, read N- to C-terminus: Probable ABC transporter permease protein RC0129 (259 aa).

5 helical membrane-spanning segments follow: residues 13–35, 49–69, 148–168, 195–215, and 237–257; these read TVKFAQSVGSFSLFSFAAVSSII, LFIGFHSLPVVAMTTFFSGAV, VITAIITMPCLVLIGDIIGVM, PIDVISGLVKAGVFGFIISII, and AVVNSSILILISNYLITELFF.

It belongs to the MlaE permease family.

The protein resides in the cell inner membrane. Could be part of an ABC transporter complex. This chain is Probable ABC transporter permease protein RC0129, found in Rickettsia conorii (strain ATCC VR-613 / Malish 7).